A 657-amino-acid polypeptide reads, in one-letter code: Zinc finger protein 630 (657 aa).

In terms of domain architecture, KRAB spans 8 to 79 (VTFEDVAVDF…ESELSRWIYP (72 aa)). 2 C2H2-type zinc fingers span residues 263–285 (NVCS…QRIH) and 291–313 (YVCG…QRIH). The C2H2-type 3; degenerate zinc-finger motif lies at 319–341 (YECTKYGRAFSRKSPFTVHQRVH). 9 C2H2-type zinc fingers span residues 347 to 369 (YECF…QRVH), 375 to 397 (FECS…QITH), 403 to 425 (YECT…QRTH), 431 to 453 (YKCG…QRIH), 459 to 481 (YVCT…QRLH), 487 to 509 (YMCT…QRIH), 515 to 537 (YQCG…LRVH), 543 to 565 (YECT…QRGH), and 571 to 593 (YECS…QKTH). The segment at 599-621 (PECAESGMTFFWKSQMITYQRRH) adopts a C2H2-type 13; degenerate zinc-finger fold. The C2H2-type 14; degenerate zinc-finger motif lies at 627–649 (SRCSDCGKAFCQHVYFTGHQNPY).

Belongs to the krueppel C2H2-type zinc-finger protein family.

It localises to the nucleus. May be involved in transcriptional regulation. The polypeptide is Zinc finger protein 630 (ZNF630) (Homo sapiens (Human)).